The primary structure comprises 145 residues: uncharacterized protein (145 aa).

At methionine 1 the chain carries N-acetylmethionine. Residues 15-41 (QLKNNSGGTNGDRNSGANNGGGENSAP) are disordered. Over residues 16-27 (LKNNSGGTNGDR) the composition is skewed to polar residues. Residues serine 121 and serine 126 each carry the phosphoserine modification. The segment at 125–145 (NSFDKQNAKNDDDEDDDDFFD) is disordered. A compositionally biased stretch (acidic residues) spans 135–145 (DDDEDDDDFFD).

Belongs to the PDCD5 family.

This is an uncharacterized protein from Saccharomyces cerevisiae (strain ATCC 204508 / S288c) (Baker's yeast).